We begin with the raw amino-acid sequence, 359 residues long: 4-dedimethylamino-4-oxo-anhydrotetracycline transaminase OxyQ (359 aa).

The substrate site is built by Gly-32, Lys-92, and Asn-155. Residues 91–92, Asn-155, Tyr-186, and 216–218 each bind pyridoxal 5'-phosphate; these read TK and SLS. Position 219 is an N6-(pyridoxal phosphate)lysine (Lys-219). Arg-227 is a binding site for pyridoxal 5'-phosphate. Residue Arg-341 participates in substrate binding.

The protein belongs to the class-I pyridoxal-phosphate-dependent aminotransferase family. The cofactor is pyridoxal 5'-phosphate.

It functions in the pathway antibiotic biosynthesis; oxytetracycline biosynthesis. In terms of biological role, involved in the biosynthesis of the tetracycline antibiotic, oxytetracycline. Catalyzes the conversion of 4-dedimethylamino-4-oxoanhydrotetracycline to yield 4-amino-4-de(dimethylamino)anhydrotetracycline (4-amino-ATC). In Streptomyces rimosus, this protein is 4-dedimethylamino-4-oxo-anhydrotetracycline transaminase OxyQ.